A 373-amino-acid polypeptide reads, in one-letter code: Coiled-coil domain-containing protein 34 (373 aa).

Disordered regions lie at residues 1 to 112 (MWAA…SLRG) and 118 to 137 (CAST…QVRL). Residue Ser52 is modified to Phosphoserine. Polar residues predominate over residues 61–76 (NSTRSLLSPLGHQSFQ). Residues 77-101 (FDEDDGDGEDEEDVDDEEDVDEDAH) are compositionally biased toward acidic residues. Residues 152-286 (KEKEERDRLQ…QEWLENAKHK (135 aa)) are a coiled coil. The segment at 324–352 (IHMPPPKEAKDLSGRKSKRPVISQPHKSS) is disordered. Residues 328-337 (PPKEAKDLSG) are compositionally biased toward basic and acidic residues.

Expressed in sperm.

The protein localises to the cell projection. Its subcellular location is the cilium. The protein resides in the flagellum. Functionally, involved in spermatogenesis. Has a probable role in anterograde intraflagellar transport which is essential for the formation of sperm flagella. The sequence is that of Coiled-coil domain-containing protein 34 (CCDC34) from Homo sapiens (Human).